Reading from the N-terminus, the 263-residue chain is 5'-nucleotidase SurE (263 aa).

The a divalent metal cation site is built by Asp-8, Asp-9, Ser-40, and Asn-93.

Belongs to the SurE nucleotidase family. A divalent metal cation serves as cofactor.

It is found in the cytoplasm. The catalysed reaction is a ribonucleoside 5'-phosphate + H2O = a ribonucleoside + phosphate. Nucleotidase that shows phosphatase activity on nucleoside 5'-monophosphates. The chain is 5'-nucleotidase SurE from Beijerinckia indica subsp. indica (strain ATCC 9039 / DSM 1715 / NCIMB 8712).